The following is a 62-amino-acid chain: Large ribosomal subunit protein uL30 (62 aa).

Belongs to the universal ribosomal protein uL30 family. Part of the 50S ribosomal subunit.

This chain is Large ribosomal subunit protein uL30, found in Marinobacter nauticus (strain ATCC 700491 / DSM 11845 / VT8) (Marinobacter aquaeolei).